The primary structure comprises 357 residues: Uroporphyrinogen decarboxylase (357 aa).

Substrate is bound by residues 30–34, Asp79, Tyr154, Ser209, and His336; that span reads RQAGR.

Belongs to the uroporphyrinogen decarboxylase family. Homodimer.

The protein localises to the cytoplasm. It carries out the reaction uroporphyrinogen III + 4 H(+) = coproporphyrinogen III + 4 CO2. It functions in the pathway porphyrin-containing compound metabolism; protoporphyrin-IX biosynthesis; coproporphyrinogen-III from 5-aminolevulinate: step 4/4. In terms of biological role, catalyzes the decarboxylation of four acetate groups of uroporphyrinogen-III to yield coproporphyrinogen-III. The protein is Uroporphyrinogen decarboxylase of Mycobacterium bovis (strain ATCC BAA-935 / AF2122/97).